The sequence spans 227 residues: Cytochrome c oxidase subunit 2 (227 aa).

At 1-14 (MAYPLQLGFQDASS) the chain is on the mitochondrial intermembrane side. A helical transmembrane segment spans residues 15 to 45 (PIMEELLHFHDHTLMIVFLISSLVLYIISLM). Topologically, residues 46–59 (LTTKLTHTSTMDAQ) are mitochondrial matrix. A helical transmembrane segment spans residues 60–87 (EVETIWTILPAIILILIALPSLRILYMM). Residues 88-227 (DEINNPSLTV…HFENWTTTML (140 aa)) are Mitochondrial intermembrane-facing. Cu cation contacts are provided by His-161, Cys-196, Glu-198, Cys-200, His-204, and Met-207. Glu-198 is a Mg(2+) binding site.

This sequence belongs to the cytochrome c oxidase subunit 2 family. Component of the cytochrome c oxidase (complex IV, CIV), a multisubunit enzyme composed of 14 subunits. The complex is composed of a catalytic core of 3 subunits MT-CO1, MT-CO2 and MT-CO3, encoded in the mitochondrial DNA, and 11 supernumerary subunits COX4I, COX5A, COX5B, COX6A, COX6B, COX6C, COX7A, COX7B, COX7C, COX8 and NDUFA4, which are encoded in the nuclear genome. The complex exists as a monomer or a dimer and forms supercomplexes (SCs) in the inner mitochondrial membrane with NADH-ubiquinone oxidoreductase (complex I, CI) and ubiquinol-cytochrome c oxidoreductase (cytochrome b-c1 complex, complex III, CIII), resulting in different assemblies (supercomplex SCI(1)III(2)IV(1) and megacomplex MCI(2)III(2)IV(2)). Found in a complex with TMEM177, COA6, COX18, COX20, SCO1 and SCO2. Interacts with TMEM177 in a COX20-dependent manner. Interacts with COX20. Interacts with COX16. Requires Cu cation as cofactor.

It localises to the mitochondrion inner membrane. The enzyme catalyses 4 Fe(II)-[cytochrome c] + O2 + 8 H(+)(in) = 4 Fe(III)-[cytochrome c] + 2 H2O + 4 H(+)(out). In terms of biological role, component of the cytochrome c oxidase, the last enzyme in the mitochondrial electron transport chain which drives oxidative phosphorylation. The respiratory chain contains 3 multisubunit complexes succinate dehydrogenase (complex II, CII), ubiquinol-cytochrome c oxidoreductase (cytochrome b-c1 complex, complex III, CIII) and cytochrome c oxidase (complex IV, CIV), that cooperate to transfer electrons derived from NADH and succinate to molecular oxygen, creating an electrochemical gradient over the inner membrane that drives transmembrane transport and the ATP synthase. Cytochrome c oxidase is the component of the respiratory chain that catalyzes the reduction of oxygen to water. Electrons originating from reduced cytochrome c in the intermembrane space (IMS) are transferred via the dinuclear copper A center (CU(A)) of subunit 2 and heme A of subunit 1 to the active site in subunit 1, a binuclear center (BNC) formed by heme A3 and copper B (CU(B)). The BNC reduces molecular oxygen to 2 water molecules using 4 electrons from cytochrome c in the IMS and 4 protons from the mitochondrial matrix. The sequence is that of Cytochrome c oxidase subunit 2 (MT-CO2) from Tupaia glis (Common tree shrew).